We begin with the raw amino-acid sequence, 364 residues long: Anhydro-N-acetylmuramic acid kinase (364 aa).

11–18 provides a ligand contact to ATP; it reads GSSLDGID.

It belongs to the anhydro-N-acetylmuramic acid kinase family.

It catalyses the reaction 1,6-anhydro-N-acetyl-beta-muramate + ATP + H2O = N-acetyl-D-muramate 6-phosphate + ADP + H(+). It participates in amino-sugar metabolism; 1,6-anhydro-N-acetylmuramate degradation. The protein operates within cell wall biogenesis; peptidoglycan recycling. Its function is as follows. Catalyzes the specific phosphorylation of 1,6-anhydro-N-acetylmuramic acid (anhMurNAc) with the simultaneous cleavage of the 1,6-anhydro ring, generating MurNAc-6-P. Is required for the utilization of anhMurNAc either imported from the medium or derived from its own cell wall murein, and thus plays a role in cell wall recycling. The polypeptide is Anhydro-N-acetylmuramic acid kinase (Pseudomonas syringae pv. tomato (strain ATCC BAA-871 / DC3000)).